Here is a 1124-residue protein sequence, read N- to C-terminus: PAN2-PAN3 deadenylation complex catalytic subunit PAN2 (1124 aa).

WD repeat units follow at residues 19–58 (IDNSKITSLQFDNQQNLLWCGDSKGTTRSFTPQSTSIPMP), 118–157 (PGFNNLSCMTFNSNTNNDLVIAGDSLFKVDLLKPNMTTSF), 158–195 (NHTGKVSMIDNTLNYLTLGKSNGEIEIFDPVSNQTVKS), and 309–348 (SSNTYLANLEVSGNGEFITFSDGFQNLHLWSFKNNNSKNF). The tract at residues 351–484 (FPSYLEQPDF…EYKLSNKFEV (134 aa)) is linker. The region spanning 484 to 861 (VPNCYSNLKI…KPIIVMYQLA (378 aa)) is the USP domain. Residues 917–1091 (IAIDAEFVAL…EDANTALLLY (175 aa)) enclose the Exonuclease domain. 4 residues coordinate a divalent metal cation: D920, E922, D1030, and D1083.

The protein belongs to the peptidase C19 family. PAN2 subfamily. As to quaternary structure, forms a heterotrimer with an asymmetric homodimer of the regulatory subunit PAN3 to form the poly(A)-nuclease (PAN) deadenylation complex. The cofactor is a divalent metal cation.

The protein resides in the cytoplasm. The enzyme catalyses Exonucleolytic cleavage of poly(A) to 5'-AMP.. Positively regulated by the regulatory subunit PAN3. In terms of biological role, catalytic subunit of the poly(A)-nuclease (PAN) deadenylation complex, one of two cytoplasmic mRNA deadenylases involved in mRNA turnover. PAN specifically shortens poly(A) tails of RNA and the activity is stimulated by poly(A)-binding protein PAB1. PAN deadenylation is followed by rapid degradation of the shortened mRNA tails by the CCR4-NOT complex. Deadenylated mRNAs are then degraded by two alternative mechanisms, namely exosome-mediated 3'-5' exonucleolytic degradation, or deadenylation-dependent mRNA decaping and subsequent 5'-3' exonucleolytic degradation by XRN1. May also be involved in post-transcriptional maturation of mRNA poly(A) tails. The chain is PAN2-PAN3 deadenylation complex catalytic subunit PAN2 from Debaryomyces hansenii (strain ATCC 36239 / CBS 767 / BCRC 21394 / JCM 1990 / NBRC 0083 / IGC 2968) (Yeast).